Reading from the N-terminus, the 148-residue chain is General odorant-binding protein 69a (148 aa).

The first 23 residues, 1-23 (MVARHFSFFLALLILYDLIPSNQ), serve as a signal peptide directing secretion. 3 disulfides stabilise this stretch: cysteine 42-cysteine 74, cysteine 70-cysteine 121, and cysteine 112-cysteine 130.

It belongs to the PBP/GOBP family. As to expression, expressed in the antenna, mostly on the anterior surface of the third antennal segment. Expressed in auxiliary cells and the third antennal segment and exported to the sensillar lymph (at protein level).

Its subcellular location is the secreted. Its function is as follows. Odorant-binding protein required for olfactory behavior and activity of pheromone-sensitive neurons in response to the male-specific pheromone cis-vaccenyl acetate (cVA). Modulates social responsivity differently in males and females, regulating male aggression and female receptivity respectively. The protein is General odorant-binding protein 69a (Obp69a) of Drosophila melanogaster (Fruit fly).